Reading from the N-terminus, the 348-residue chain is Glucokinase (348 aa).

An ATP-binding site is contributed by 14-19; sequence GDVGGS. The interval 327–348 is disordered; that stretch reads SDPAPVAAPTHPRGGTAGDMHA.

This sequence belongs to the bacterial glucokinase family.

It is found in the cytoplasm. It catalyses the reaction D-glucose + ATP = D-glucose 6-phosphate + ADP + H(+). In Chromobacterium violaceum (strain ATCC 12472 / DSM 30191 / JCM 1249 / CCUG 213 / NBRC 12614 / NCIMB 9131 / NCTC 9757 / MK), this protein is Glucokinase.